Here is a 265-residue protein sequence, read N- to C-terminus: Hydroxyethylthiazole kinase (265 aa).

Met-50 serves as a coordination point for substrate. The ATP site is built by Arg-125 and Thr-171. Gly-198 lines the substrate pocket.

The protein belongs to the Thz kinase family. Requires Mg(2+) as cofactor.

The catalysed reaction is 5-(2-hydroxyethyl)-4-methylthiazole + ATP = 4-methyl-5-(2-phosphooxyethyl)-thiazole + ADP + H(+). Its pathway is cofactor biosynthesis; thiamine diphosphate biosynthesis; 4-methyl-5-(2-phosphoethyl)-thiazole from 5-(2-hydroxyethyl)-4-methylthiazole: step 1/1. Its function is as follows. Catalyzes the phosphorylation of the hydroxyl group of 4-methyl-5-beta-hydroxyethylthiazole (THZ). The polypeptide is Hydroxyethylthiazole kinase (Salmonella choleraesuis (strain SC-B67)).